The primary structure comprises 457 residues: Methylenetetrahydrofolate--tRNA-(uracil-5-)-methyltransferase TrmFO (457 aa).

7–12 (GAGLAG) contributes to the FAD binding site. A disordered region spans residues 38 to 58 (FTSRQDEKTGTHDVRNATQTR). Residues 40-52 (SRQDEKTGTHDVR) are compositionally biased toward basic and acidic residues.

It belongs to the MnmG family. TrmFO subfamily. The cofactor is FAD.

Its subcellular location is the cytoplasm. The catalysed reaction is uridine(54) in tRNA + (6R)-5,10-methylene-5,6,7,8-tetrahydrofolate + NADH + H(+) = 5-methyluridine(54) in tRNA + (6S)-5,6,7,8-tetrahydrofolate + NAD(+). It carries out the reaction uridine(54) in tRNA + (6R)-5,10-methylene-5,6,7,8-tetrahydrofolate + NADPH + H(+) = 5-methyluridine(54) in tRNA + (6S)-5,6,7,8-tetrahydrofolate + NADP(+). Functionally, catalyzes the folate-dependent formation of 5-methyl-uridine at position 54 (M-5-U54) in all tRNAs. The chain is Methylenetetrahydrofolate--tRNA-(uracil-5-)-methyltransferase TrmFO from Hydrogenobaculum sp. (strain Y04AAS1).